Here is a 701-residue protein sequence, read N- to C-terminus: Polyribonucleotide nucleotidyltransferase (701 aa).

2 residues coordinate Mg(2+): aspartate 480 and aspartate 486. One can recognise a KH domain in the interval 547 to 606 (PKIDTIKIDVDKIKVVIGKGGETIDKIIAETGVKIDIDDEGNVSIYSSDQAAINRTKEII). Residues 616–684 (GEVYHAKVVR…EKGRVDASMK (69 aa)) form the S1 motif domain. Residues 682–701 (SMKALIPRPPKPEKKEEKHD) are disordered. A compositionally biased stretch (basic and acidic residues) spans 691–701 (PKPEKKEEKHD).

This sequence belongs to the polyribonucleotide nucleotidyltransferase family. Requires Mg(2+) as cofactor.

It localises to the cytoplasm. The enzyme catalyses RNA(n+1) + phosphate = RNA(n) + a ribonucleoside 5'-diphosphate. Involved in mRNA degradation. Catalyzes the phosphorolysis of single-stranded polyribonucleotides processively in the 3'- to 5'-direction. In Streptococcus pyogenes serotype M12 (strain MGAS2096), this protein is Polyribonucleotide nucleotidyltransferase.